Consider the following 811-residue polypeptide: Methionine--tRNA ligase (811 aa).

Positions 11 to 21 (PYVNNVPHLGN) match the 'HIGH' region motif. Positions 142, 145, 155, and 158 each coordinate Zn(2+). Positions 344-348 (KFSKS) match the 'KMSKS' region motif. Position 347 (K347) interacts with ATP. The tract at residues 606 to 640 (GVSVPRTAQMPTGMNKKETDAQQKKEEREMPPPSD) is disordered. Basic and acidic residues predominate over residues 620–635 (NKKETDAQQKKEEREM). Residues 648–753 (FSERVVLKVA…PWALPGERAT (106 aa)) enclose the tRNA-binding domain.

Belongs to the class-I aminoacyl-tRNA synthetase family. MetG type 1 subfamily. In terms of assembly, homodimer. Requires Zn(2+) as cofactor.

It localises to the cytoplasm. The catalysed reaction is tRNA(Met) + L-methionine + ATP = L-methionyl-tRNA(Met) + AMP + diphosphate. Is required not only for elongation of protein synthesis but also for the initiation of all mRNA translation through initiator tRNA(fMet) aminoacylation. The chain is Methionine--tRNA ligase from Treponema pallidum (strain Nichols).